The sequence spans 104 residues: MAVTGIENVLQQLQATALSAANGTPQDGVAQGTFSSELKAAIDRISDNQNHARLQAQQFEMGVPGVALNDVMLDMQKSSVSLQMGVQVRNRLVAAYQDIMNMQV.

Belongs to the FliE family.

It is found in the bacterial flagellum basal body. In Edwardsiella ictaluri (strain 93-146), this protein is Flagellar hook-basal body complex protein FliE.